Here is a 1156-residue protein sequence, read N- to C-terminus: Pesticidal crystal protein Cry9Aa (1156 aa).

A propeptide spans 1–23 (MNQNKHGIIGASNCGCASDDVAK) (removed in mature form).

It belongs to the delta endotoxin family.

In terms of biological role, promotes colloidosmotic lysis by binding to the midgut epithelial cells of insects. This protein is toxic to Galleria mellonella. This is Pesticidal crystal protein Cry9Aa (cry9Aa) from Bacillus thuringiensis subsp. galleriae.